A 195-amino-acid polypeptide reads, in one-letter code: Imidazoleglycerol-phosphate dehydratase (195 aa).

This sequence belongs to the imidazoleglycerol-phosphate dehydratase family.

Its subcellular location is the cytoplasm. The catalysed reaction is D-erythro-1-(imidazol-4-yl)glycerol 3-phosphate = 3-(imidazol-4-yl)-2-oxopropyl phosphate + H2O. The protein operates within amino-acid biosynthesis; L-histidine biosynthesis; L-histidine from 5-phospho-alpha-D-ribose 1-diphosphate: step 6/9. This Bordetella bronchiseptica (strain ATCC BAA-588 / NCTC 13252 / RB50) (Alcaligenes bronchisepticus) protein is Imidazoleglycerol-phosphate dehydratase.